An 860-amino-acid chain; its full sequence is MDGIHHGGHGRARPSHPMAFPDFDADSHMMSDDFSLDTPFSPSGSSNANDTVLGNSIFPEWTNGVSRGDSPDEMQRKDPLGAQIWKLYTRTKSQLPNQERMENLTWRMMAMNLKRKEREQQARASETLSPTPSGIAQMRLSDQPSPAGGDLAHDTTSDPMNLDDFIVPFDSPAEHSSHPIDRHFTATPTGSIPIKSRKDHAMMDSSTAASFPHPPQDQRTNSEFGYVARRVRKTSVDDRQFFAGLSVPTRKRPAEASPQVPPVSNAMMAQHSELSSALPDYSLDHPPSAYALSGNGTVGPRRPQHHHTHSNIPYGLDTYGISENHGLNSAGSYQQNFHFSPSDSPMTAGNPFSSLYAQTPLASSLNSTEFFSPPPSGYQSTVSTPQPIYEGEQSIFFSDAPSAESHTQRRIPNYIQQRQSNLSASLQPRYMYNMSNGESHSGSAVTGPPTTHVSGFSVPPPQHINPSQVLGHGEFSTTAPSSSMFTFGGDSDNEDDDGNFGEGGGMTMPNDFASLDESGDMSAGLHWDGGFPGSIHSLPGFNAQHRKHVTIGSTDMIDGPPEWNQGGTLGRAHGSAASVSEVRNQNQDPRRYGKVPRTASTPNAAALLRQSLNGSASGPPTNHPSPSTPPESGLSSAVPSRPGSPGGSKNGDPNAGPTTCTNCFTQTTPLWRRNPEGQPLCNACGLFLKLHGVVRPLSLKTDVIKKRNRSSASTLAVGTSRSSKKSSRKNSIQHAPSTSISSRMNTSESPPSMNGSSSLGKTGVVPIAAAPPKSGPPAGVAQARAGVQVAPRRQRRLEKAPTGSDPDAKDSPKSAAPPSRSKVLPLAPAMAPPAAANPANHNIAGGQGASQEWEWLTMSL.

Positions 1–14 (MDGIHHGGHGRARP) are enriched in basic residues. Disordered regions lie at residues 1 to 24 (MDGI…PDFD), 116 to 159 (KERE…TSDP), 174 to 193 (EHSS…GSIP), 559 to 600 (GPPE…RTAS), and 612 to 658 (LNGS…AGPT). A compositionally biased stretch (polar residues) spans 122 to 144 (ARASETLSPTPSGIAQMRLSDQP). The segment covering 174 to 184 (EHSSHPIDRHF) has biased composition (basic and acidic residues). A compositionally biased stretch (polar residues) spans 577–587 (ASVSEVRNQNQ). A GATA-type zinc finger spans residues 660–684 (CTNCFTQTTPLWRRNPEGQPLCNAC). A disordered region spans residues 706–850 (KRNRSSASTL…HNIAGGQGAS (145 aa)). 2 stretches are compositionally biased toward polar residues: residues 710–719 (SSASTLAVGT) and 732–746 (IQHA…RMNT). Low complexity-rich tracts occupy residues 747–758 (SESPPSMNGSSS), 766–791 (PIAA…QVAP), and 813–840 (KSAA…NPAN).

It localises to the nucleus. Major nitrogen regulatory protein. The sequence is that of Nitrogen regulatory protein areA (AREA) from Penicillium roqueforti.